The primary structure comprises 466 residues: Putative chitinase 2 (466 aa).

Residues 1–17 (MYLTIWLVPLLAVGTWG) form the signal peptide. Residues 20–380 (FNRFCHYNSW…MAVIHGLNAY (361 aa)) enclose the GH18 domain. An intrachain disulfide couples Cys24 to Cys49. Catalysis depends on Glu141, which acts as the Proton donor. Residues 395 to 447 (YNKKILRARVSLRNYRRRNQQGKVAEMEQRIRNLEQELQQSMGNMAYERQQAQ) are a coiled coil.

It belongs to the glycosyl hydrolase 18 family. In terms of tissue distribution, prismatic layer of shell (at protein level). Expressed primarily in the mantle with highest level in the mantle edge and lower level in the mantle pallium.

Its subcellular location is the secreted. The catalysed reaction is Random endo-hydrolysis of N-acetyl-beta-D-glucosaminide (1-&gt;4)-beta-linkages in chitin and chitodextrins.. The sequence is that of Putative chitinase 2 from Margaritifera margaritifera (Freshwater pearl mussel).